We begin with the raw amino-acid sequence, 502 residues long: Keratin-associated protein 16-1 (502 aa).

15 repeat units span residues 4-8 (CCCSR), 58-62 (CCQPS), 73-77 (CCEAT), 93-97 (CCEAT), 108-112 (CCQPV), 113-117 (CCEAT), 133-137 (CCEAT), 152-156 (CCETS), 177-181 (CCQPV), 187-191 (CCSAV), 212-216 (CCQPV), 222-226 (CCPSV), 272-276 (CCVQG), 292-296 (CCVSS), and 347-351 (CCRPG). The interval 73–307 (CCEATICEPS…CQPVCPEPSP (235 aa)) is 15 X 5 AA repeats of C-C-X(3). A disordered region spans residues 435–502 (RQPCTDSDND…QPAASKPADR (68 aa)). Positions 489 to 502 (AAAPQPAASKPADR) are enriched in low complexity.

Belongs to the KRTAP type 16 family. Interacts with hair keratins.

In terms of biological role, in the hair cortex, hair keratin intermediate filaments are embedded in an interfilamentous matrix, consisting of hair keratin-associated proteins (KRTAP), which are essential for the formation of a rigid and resistant hair shaft through their extensive disulfide bond cross-linking with abundant cysteine residues of hair keratins. The matrix proteins include the high-sulfur and high-glycine-tyrosine keratins. The polypeptide is Keratin-associated protein 16-1 (Krtap16-1) (Mus musculus (Mouse)).